Consider the following 185-residue polypeptide: 4-nitrophenol 4-monooxygenase/4-nitrocatechol 2-monooxygenase, reductase component (185 aa).

This sequence belongs to the non-flavoprotein flavin reductase family. The 4-NP/4-NCA monooxygenase is composed of an oxygenase component NpcA and a reductase component NpcB.

The enzyme catalyses 4-nitrophenol + NADH + O2 + H(+) = 4-nitrocatechol + NAD(+) + H2O. The catalysed reaction is 4-nitrocatechol + NADPH + O2 = 2-hydroxy-1,4-benzoquinone + nitrite + NADP(+) + H2O. It catalyses the reaction 4-nitrocatechol + NADH + O2 = 2-hydroxy-1,4-benzoquinone + nitrite + NAD(+) + H2O. Its pathway is aromatic compound metabolism. It participates in xenobiotic degradation. With respect to regulation, inhibited by methimazole. In terms of biological role, involved in the degradation of para-nitrophenol (4-NP). Catalyzes both the initial hydroxylation of 4-NP to produce 4-nitrocatechol (4-NCA) and the subsequent oxidative release of the nitro group from 4-NCA to produce 2-hydroxy-1,4-benzoquinone. It can also use 4-nitroresorcinol as substrate with a rate of nitrite release similar to that observed with the two physiological substrates, 4-PN and 4-NCA. This is 4-nitrophenol 4-monooxygenase/4-nitrocatechol 2-monooxygenase, reductase component (npcB) from Rhodococcus opacus (Nocardia opaca).